The chain runs to 147 residues: MVASRAPRSESPWLKKPMHGVSGSTAMASTPWSSMPPSSHSLGAQSQLVCSGCRNLLMYPAGATSICCAVCGTVTAVPAPEQKSSCNVHENKERLKGNTNGFRAPQRCARRVDGACTQVAREVHTEVALVIFTLLCVTLPGLLFSLG.

The interval 1-38 is disordered; the sequence is MVASRAPRSESPWLKKPMHGVSGSTAMASTPWSSMPPS. Positions 22-38 are enriched in polar residues; sequence SGSTAMASTPWSSMPPS. The tract at residues 47-77 is putative zinc finger; that stretch reads QLVCSGCRNLLMYPAGATSICCAVCGTVTAV.

It localises to the nucleus. Its function is as follows. Putative zinc finger that may be involved in programmed cell death and defense response. The chain is Protein LOL1 (LOL1) from Oryza sativa subsp. japonica (Rice).